Reading from the N-terminus, the 377-residue chain is Phosphatidylserine decarboxylase proenzyme, mitochondrial (377 aa).

The transit peptide at 1-34 (MMPLFNVLRSARMLPAVSKKVVSPPMMLRSVREL) directs the protein to the mitochondrion. Topologically, residues 35–61 (TNQSKNVYATKEVIIGASQKKKRSWVK) are mitochondrial matrix. A helical membrane pass occupies residues 62–80 (WLSVSTLIIGGASYVGYLF). Over 81-377 (TPDWREIVDS…YGQSLVADGV (297 aa)) the chain is Mitochondrial intermembrane. Active-site charge relay system; for autoendoproteolytic cleavage activity residues include D181, H238, and S344. Catalysis depends on S344, which acts as the Schiff-base intermediate with substrate; via pyruvic acid; for decarboxylase activity. The residue at position 344 (S344) is a Pyruvic acid (Ser); by autocatalysis.

This sequence belongs to the phosphatidylserine decarboxylase family. PSD-B subfamily. Eukaryotic type I sub-subfamily. As to quaternary structure, heterodimer of a large membrane-associated beta subunit and a small pyruvoyl-containing alpha subunit. The cofactor is pyruvate. In terms of processing, is synthesized initially as an inactive proenzyme. Formation of the active enzyme involves a self-maturation process in which the active site pyruvoyl group is generated from an internal serine residue via an autocatalytic post-translational modification. Two non-identical subunits are generated from the proenzyme in this reaction, and the pyruvate is formed at the N-terminus of the alpha chain, which is derived from the carboxyl end of the proenzyme. The autoendoproteolytic cleavage occurs by a canonical serine protease mechanism, in which the side chain hydroxyl group of the serine supplies its oxygen atom to form the C-terminus of the beta chain, while the remainder of the serine residue undergoes an oxidative deamination to produce ammonia and the pyruvoyl prosthetic group on the alpha chain. During this reaction, the Ser that is part of the protease active site of the proenzyme becomes the pyruvoyl prosthetic group, which constitutes an essential element of the active site of the mature decarboxylase.

It localises to the mitochondrion inner membrane. It carries out the reaction a 1,2-diacyl-sn-glycero-3-phospho-L-serine + H(+) = a 1,2-diacyl-sn-glycero-3-phosphoethanolamine + CO2. Its pathway is phospholipid metabolism; phosphatidylethanolamine biosynthesis; phosphatidylethanolamine from CDP-diacylglycerol: step 2/2. Functionally, catalyzes the formation of phosphatidylethanolamine (PtdEtn) from phosphatidylserine (PtdSer). Plays a central role in phospholipid metabolism and in the interorganelle trafficking of phosphatidylserine. This is Phosphatidylserine decarboxylase proenzyme, mitochondrial from Caenorhabditis elegans.